We begin with the raw amino-acid sequence, 92 residues long: C-C motif chemokine 4 (92 aa).

Positions 1 to 23 are cleaved as a signal peptide; it reads MKLGVTVLSVALLVAALCPPALS. Cystine bridges form between Cys34–Cys58 and Cys35–Cys74.

Belongs to the intercrine beta (chemokine CC) family. In terms of assembly, homodimer.

The protein localises to the secreted. Functionally, monokine with inflammatory and chemokinetic properties. The protein is C-C motif chemokine 4 (CCL4) of Oryctolagus cuniculus (Rabbit).